The sequence spans 107 residues: Nucleoid-associated protein AZOSEA06390 (107 aa).

The protein belongs to the YbaB/EbfC family. Homodimer.

The protein localises to the cytoplasm. Its subcellular location is the nucleoid. Functionally, binds to DNA and alters its conformation. May be involved in regulation of gene expression, nucleoid organization and DNA protection. In Aromatoleum aromaticum (strain DSM 19018 / LMG 30748 / EbN1) (Azoarcus sp. (strain EbN1)), this protein is Nucleoid-associated protein AZOSEA06390.